The following is a 212-amino-acid chain: HTH-type transcriptional regulatory protein RaaS (212 aa).

The 60-residue stretch at 6-65 (LTAHARIREAAIEQFGRHGFGVGLRAIAEAAGVSAALVIHHFGSKEGLRKACDDFVAEEI) folds into the HTH tetR-type domain. Positions 28–47 (GLRAIAEAAGVSAALVIHHF) form a DNA-binding region, H-T-H motif.

Homodimer. Interacts with long chain acyl-CoA derivatives. Interacts with several drugs such rhodamine 6G, ethidium and safranin O.

Interaction with long chain acyl-CoA derivatives (oleoyl-CoA and, to lesser extent, stearoyl-CoA) prevents binding to DNA, leading to the expression of the target genes. Long chain acyl-CoA derivatives may serve as biological indicators of the bacterial metabolic state. In terms of biological role, regulates the expression of the Rv1217c-Rv1218c multidrug efflux system and its own expression. Acts by binding to promoter regions of Rv1219c and upstream of the Rv1218c gene. Important for survival in prolonged stationary phase and during macrophage infection. May be used to eliminate non-growing mycobacteria. The protein is HTH-type transcriptional regulatory protein RaaS of Mycobacterium tuberculosis (strain ATCC 25618 / H37Rv).